Reading from the N-terminus, the 430-residue chain is Peptidoglycan DD-endopeptidase ShyA (430 aa).

The signal sequence occupies residues 1-35; sequence MISKSIILRFSELSMRKKATLVGLPLLAVAAISSS. Zn(2+) contacts are provided by His-297, Asp-301, and His-378.

It belongs to the peptidase M23B family. Zn(2+) is required as a cofactor.

The protein resides in the periplasm. It functions in the pathway cell wall degradation; peptidoglycan degradation. With respect to regulation, reduced activity in 0.5 mM EDTA and a complete loss of activity at higher EDTA concentrations. The effect of EDTA can be reversed by addition of 1 mM ZnCl(2). Conformational switching between open (catalytically active) and closed (catalytically inactive) conformation of this protein is suggested mechanism of its regulation. The signal or inducer of the conformational shift to the open form unmasking the active site is currently not understood. Functionally, cell wall peptidoglycan (PG) DD-endopeptidase essential for cell growth and elongation. Hydrolyzes peptide cross-links which covalently connect adjacent PG strands probably to allow insertion of new glycans and thus cell wall expansion. Degrades purified whole PG sacculi in vitro. Releases predominantly short glycan chains from the PG. Cleaves D,D cross-linked muropeptides specifically preferring dimeric tetrapeptide-tetrapeptide (D44) substrates and has only little activity on dimeric tetrapeptide-pentapeptide (D45) substrates. Also converts more than 50% of tetrapeptide-tripeptide (D43) to product as well as more than 50% of D43M, which contains D-Met instead of D-Ala in the fourth position of the acceptor moiety. Cleaves the D,D bond between diaminopimelic acid (DAP) and D-Ala of the PG substrate in vitro. No cleavage of L,D bond connecting two DAP moieties. This is Peptidoglycan DD-endopeptidase ShyA from Vibrio cholerae serotype O1 (strain ATCC 39315 / El Tor Inaba N16961).